A 76-amino-acid chain; its full sequence is ATP synthase subunit c (76 aa).

2 helical membrane-spanning segments follow: residues 7-27 (VATA…IGII) and 50-70 (FIGI…AFLI).

The protein belongs to the ATPase C chain family. In terms of assembly, F-type ATPases have 2 components, F(1) - the catalytic core - and F(0) - the membrane proton channel. F(1) has five subunits: alpha(3), beta(3), gamma(1), delta(1), epsilon(1). F(0) has four main subunits: a(1), b(1), b'(1) and c(10-14). The alpha and beta chains form an alternating ring which encloses part of the gamma chain. F(1) is attached to F(0) by a central stalk formed by the gamma and epsilon chains, while a peripheral stalk is formed by the delta, b and b' chains.

It is found in the cell membrane. Functionally, f(1)F(0) ATP synthase produces ATP from ADP in the presence of a proton or sodium gradient. F-type ATPases consist of two structural domains, F(1) containing the extramembraneous catalytic core and F(0) containing the membrane proton channel, linked together by a central stalk and a peripheral stalk. During catalysis, ATP synthesis in the catalytic domain of F(1) is coupled via a rotary mechanism of the central stalk subunits to proton translocation. Key component of the F(0) channel; it plays a direct role in translocation across the membrane. A homomeric c-ring of between 10-14 subunits forms the central stalk rotor element with the F(1) delta and epsilon subunits. This is ATP synthase subunit c from Chloroflexus aurantiacus (strain ATCC 29366 / DSM 635 / J-10-fl).